The sequence spans 373 residues: CASP-like protein UU6 (373 aa).

2 disordered regions span residues 1-100 (MGTL…GSEG) and 172-195 (TKETETTPESSRASDEDAPTPKKK). Topologically, residues 1–204 (MGTLTDPTVD…KHRLRKHLTA (204 aa)) are cytoplasmic. The span at 56-74 (KTNTGNAAESTASTENGET) shows a compositional bias: polar residues. Residues 205–225 (IGAYSFAFRFSETVLSLIAIV) traverse the membrane as a helical segment. Topologically, residues 226-253 (VMCSTRGSMRTDGVDFGTLKFNHFQAYR) are extracellular. Residues 254–274 (YLVAVNVIVFVYSTFQFIQLL) form a helical membrane-spanning segment. Residues 275-276 (YT) are Cytoplasmic-facing. The chain crosses the membrane as a helical span at residues 277–297 (VILGISFIPSIFISTWMTFGF). Residues 298–342 (DQLFLYLLLSASTSAATVANMSYTGEMGIQLCSRFDVGSFCSKAD) are Extracellular-facing. N-linked (GlcNAc...) asparagine glycosylation is present at asparagine 317. A helical transmembrane segment spans residues 343 to 363 (VAVTMSFFAVLAMLSSTILAI). The Cytoplasmic segment spans residues 364-373 (YRIAVLLREY).

The protein belongs to the Casparian strip membrane proteins (CASP) family. As to quaternary structure, homodimer and heterodimers.

It localises to the cell membrane. In Physcomitrium patens (Spreading-leaved earth moss), this protein is CASP-like protein UU6.